The primary structure comprises 149 residues: Nucleoside diphosphate kinase (149 aa).

6 residues coordinate ATP: K9, F57, R85, T91, R102, and N112. Residue H115 is the Pros-phosphohistidine intermediate of the active site.

The protein belongs to the NDK family. Homotetramer. It depends on Mg(2+) as a cofactor.

It localises to the cytoplasm. It catalyses the reaction dZDP + ATP = dZTP + ADP. It carries out the reaction a 2'-deoxyribonucleoside 5'-diphosphate + ATP = a 2'-deoxyribonucleoside 5'-triphosphate + ADP. The catalysed reaction is a ribonucleoside 5'-diphosphate + ATP = a ribonucleoside 5'-triphosphate + ADP. Its pathway is purine metabolism. Major role in the synthesis of nucleoside triphosphates other than ATP. The ATP gamma phosphate is transferred to the NDP beta phosphate via a ping-pong mechanism, using a phosphorylated active-site intermediate. Its function is as follows. (Microbial infection) Catalyzes the phosphorylation of dZDP to dZTP, when the bacterium is infected by a phage that produces the substrate for the synthesis of dZTP (2- amino-2'-deoxyadenosine 5'-triphosphate), which is then used by the phage as a DNA polymerase substrate. In Picosynechococcus sp. (strain ATCC 27264 / PCC 7002 / PR-6) (Agmenellum quadruplicatum), this protein is Nucleoside diphosphate kinase.